An 802-amino-acid polypeptide reads, in one-letter code: Serine/threonine-protein kinase zyg-8 (802 aa).

Residues 1–13 (MPQTSAWQLNDTT) are compositionally biased toward polar residues. Positions 1 to 102 (MPQTSAWQLN…SAPSTSSAHR (102 aa)) are disordered. A compositionally biased stretch (pro residues) spans 15 to 24 (RPPPPPPPPG). Positions 89–99 (SPSSSAPSTSS) are enriched in low complexity. Doublecortin domains lie at 211–298 (KRLR…VDYS) and 340–423 (RIIK…ADDL). Positions 430–470 (HKSVGSGTSSNMRRTSRRSTMPNRNESLRHDRSGSVIPDQD) are disordered. Over residues 434 to 454 (GSGTSSNMRRTSRRSTMPNRN) the composition is skewed to low complexity. The Protein kinase domain maps to 482–743 (FQLVRLIGDG…AGELLNDEWM (262 aa)). ATP contacts are provided by residues 488 to 496 (IGDGNTAVV) and Lys512. Asp604 serves as the catalytic Proton acceptor.

Belongs to the protein kinase superfamily. CAMK Ser/Thr protein kinase family. CaMK subfamily. Interacts with tac-1. In terms of tissue distribution, expressed in AFD thermosensory neurons. Expressed in cells near the nerve ring, in motor neurons in the ventral nerve cord and in the six touch receptor neurons including ALML/R, PLML/R and AVM and PVM. Expressed in hypodermal and neural tissues and in the germline.

It localises to the cytoplasm. The protein resides in the cytoskeleton. It is found in the microtubule organizing center. Its subcellular location is the centrosome. The protein localises to the spindle. It carries out the reaction L-seryl-[protein] + ATP = O-phospho-L-seryl-[protein] + ADP + H(+). The enzyme catalyses L-threonyl-[protein] + ATP = O-phospho-L-threonyl-[protein] + ADP + H(+). Its function is as follows. Probable kinase. Kinase activity may be involved in positioning of spindle poles in meiosis and mitosis. Plays a role in spindle positioning during asymmetric division of one-cell stage embryos. Affects spindle position by promoting microtubule assembly during anaphase. Plays a role in the assembly and stability of oocyte spindle, perhaps balancing the forces in the spindle and maintaining their morphology during metaphase. Plays a role in cell division and in embryonic viability up until gastrulation. Required for neuronal morphology and polarity and restricting ectopic process outgrowth; probably as a result of a role in maintaining microtubule integrity. Involved in maintaining neuronal microtubule number, length and packing. May promote axonal and synaptic growth. Plays a role in regulating thermotaxis responses in AFD thermosensory neurons. Required for touch sensitivity in adult touch response receptor neurons. The polypeptide is Serine/threonine-protein kinase zyg-8 (Caenorhabditis elegans).